A 333-amino-acid polypeptide reads, in one-letter code: Aquaporin-1 (333 aa).

The disordered stretch occupies residues 1-26; that stretch reads MQKMSEKPLYRAAENPTRNADRRAGR. 2 helical membrane passes run 85–105 and 116–136; these read LAMF…HFTG and FHGF…GGII. Positions 137–139 match the NPA 1 motif; that stretch reads NPA. The next 3 helical transmembrane spans lie at 156-176, 213-233, and 245-265; these read LVLV…VYLI, TGAI…FLSI, and LFPF…SYSA. Residues 270 to 272 carry the NPA 2 motif; the sequence is NPA. A helical transmembrane segment spans residues 303–323; the sequence is WLFPYVGALFGAVMYQIFVGV.

The protein belongs to the MIP/aquaporin (TC 1.A.8) family.

The protein localises to the cell membrane. Aquaglyceroporin that may modulate the water content and osmolytes during anhydrobiosis. The sequence is that of Aquaporin-1 from Milnesium tardigradum (Water bear).